A 360-amino-acid chain; its full sequence is MAIARLIVENFRNISAVDLEFDHGFNFLVGNNGSGKTSLLEALFYLGHGRSFKSSVTTRVIRYDQPHFTLHGRIRELQHEWSVGLQKQRKDGNTIVKINGEDGNKISDLAHLLPMQIITPEGLTLLNGGPSYRRAFLDWGLFHHQPNFHSAWSALHRLLKQRNAALNQTYDYNMLKPWDMELAKLAHQVSQWRADYAEALSPEIEQTCRLFLPELDIHVSFHQGWEKDTDYAQLLTENFERDKAIGYTVSGPQKADFRFKSNGLPVEDVLSRGQLKLLMCALRLAQGEHLMAQKNRHCIFLIDDFASELDETKRALLAQRLQNSNSQVFVTAISPEQLKQMQPEKHRTFQVVNGQIEQLL.

30–37 (GNNGSGKT) is a binding site for ATP.

The protein belongs to the RecF family.

The protein localises to the cytoplasm. Its function is as follows. The RecF protein is involved in DNA metabolism; it is required for DNA replication and normal SOS inducibility. RecF binds preferentially to single-stranded, linear DNA. It also seems to bind ATP. This chain is DNA replication and repair protein RecF, found in Mannheimia succiniciproducens (strain KCTC 0769BP / MBEL55E).